Here is a 307-residue protein sequence, read N- to C-terminus: Ornithine carbamoyltransferase (307 aa).

Carbamoyl phosphate contacts are provided by residues 50 to 53, Gln77, Arg101, and 128 to 131; these read STRT and HPCQ. Residues Asn160, Asp224, and 228-229 contribute to the L-ornithine site; that span reads SM. Residues 264 to 265 and Arg292 each bind carbamoyl phosphate; that span reads CL.

It belongs to the aspartate/ornithine carbamoyltransferase superfamily. OTCase family.

It is found in the cytoplasm. The catalysed reaction is carbamoyl phosphate + L-ornithine = L-citrulline + phosphate + H(+). It functions in the pathway amino-acid biosynthesis; L-arginine biosynthesis; L-arginine from L-ornithine and carbamoyl phosphate: step 1/3. In terms of biological role, reversibly catalyzes the transfer of the carbamoyl group from carbamoyl phosphate (CP) to the N(epsilon) atom of ornithine (ORN) to produce L-citrulline. This Mycolicibacterium gilvum (strain PYR-GCK) (Mycobacterium gilvum (strain PYR-GCK)) protein is Ornithine carbamoyltransferase.